The chain runs to 426 residues: Glutamate-1-semialdehyde 2,1-aminomutase (426 aa).

Residue Lys-265 is modified to N6-(pyridoxal phosphate)lysine.

Belongs to the class-III pyridoxal-phosphate-dependent aminotransferase family. HemL subfamily. Homodimer. Requires pyridoxal 5'-phosphate as cofactor.

It is found in the cytoplasm. It catalyses the reaction (S)-4-amino-5-oxopentanoate = 5-aminolevulinate. The protein operates within porphyrin-containing compound metabolism; protoporphyrin-IX biosynthesis; 5-aminolevulinate from L-glutamyl-tRNA(Glu): step 2/2. The sequence is that of Glutamate-1-semialdehyde 2,1-aminomutase from Enterobacter sp. (strain 638).